Consider the following 220-residue polypeptide: Outer membrane protein assembly factor BamD (220 aa).

Residues 1–22 (MRLKHFKTFLFITMAIIVIGTG) form the signal peptide. Residue C23 is the site of N-palmitoyl cysteine attachment. C23 carries S-diacylglycerol cysteine lipidation.

This sequence belongs to the BamD family. As to quaternary structure, part of the Bam complex.

It localises to the cell outer membrane. Part of the outer membrane protein assembly complex, which is involved in assembly and insertion of beta-barrel proteins into the outer membrane. The sequence is that of Outer membrane protein assembly factor BamD from Helicobacter pylori (strain ATCC 700392 / 26695) (Campylobacter pylori).